The sequence spans 999 residues: Sarcoplasmic/endoplasmic reticulum calcium ATPase 3 (999 aa).

Met-1 carries the post-translational modification N-acetylmethionine. The Cytoplasmic segment spans residues 1–48 (MEEAHLLSAADVLRRFSVTAEGGLSLEQVTDARERYGPNELPTEEGKS). Ser-17 carries the post-translational modification Phosphoserine. Residue Thr-19 is modified to Phosphothreonine. Residue Ser-25 is modified to Phosphoserine. The chain crosses the membrane as a helical span at residues 49–69 (LWELVVEQFEDLLVRILLLAA). The Lumenal portion of the chain corresponds to 70-89 (LVSFVLAWFEEGEETTTAFV). The chain crosses the membrane as a helical span at residues 90–110 (EPLVIMLILVANAIVGVWQER). Residues 111–253 (NAESAIEALK…PERTPLQRKL (143 aa)) lie on the Cytoplasmic side of the membrane. A helical membrane pass occupies residues 254 to 273 (DEFGRQLSHAISVICVAVWV). The Lumenal segment spans residues 274–295 (INIGHFADPAHGGSWLRGAVYY). Residues 296 to 313 (FKIAVALAVAAIPEGLPA) traverse the membrane as a helical segment. Residues Val-304, Ala-305, Ile-307, and Glu-309 each contribute to the Ca(2+) site. At 314-757 (VITTCLALGT…EEGRAIYNNM (444 aa)) the chain is on the cytoplasmic side. The active-site 4-aspartylphosphate intermediate is Asp-351. The Mg(2+) site is built by Asp-351 and Thr-353. Thr-353 serves as a coordination point for ATP. The segment at 370 to 400 (AEAEAGTCRLHEFTISGTTYTPEGEVRQGEQ) is interaction with phospholamban 1. Thr-415 is modified (phosphothreonine). ATP contacts are provided by Glu-442, Arg-489, Lys-515, Arg-560, Thr-625, Gly-626, and Asp-627. Phosphoserine is present on Ser-662. ATP is bound by residues Arg-678 and Lys-684. Residue Asp-703 participates in Mg(2+) binding. Position 706 (Asn-706) interacts with ATP. Residues 758–777 (KQFIRYLISSNVGEVVCIFL) form a helical membrane-spanning segment. 2 residues coordinate Ca(2+): Asn-768 and Glu-771. Residues 778 to 787 (TAILGLPEAL) lie on the Lumenal side of the membrane. A helical transmembrane segment spans residues 788–808 (IPVQLLWVNLVTDGLPATALG). Residues 788–808 (IPVQLLWVNLVTDGLPATALG) form an interaction with phospholamban 2 region. Ca(2+) contacts are provided by Asn-796, Thr-799, and Asp-800. At 809 to 828 (FNPPDLDIMEKPPRNPREAL) the chain is on the cytoplasmic side. Residues 829 to 851 (ISGWLFFRYLAIGVYVGLATVAA) traverse the membrane as a helical segment. Residues 852–897 (ATWWFLYDTEGPQVTFYQLRNFLKCSEDNPLFAGIDCKVFESRFPT) lie on the Lumenal side of the membrane. A helical transmembrane segment spans residues 898–917 (TMALSVLVTIEMCNALNSVS). Position 908 (Glu-908) interacts with Ca(2+). Over 918-930 (ENQSLLRMPPWLN) the chain is Cytoplasmic. Residues 931 to 949 (PWLLGAVVMSMALHFLILL) form a helical membrane-spanning segment. Over 950 to 964 (VPPLPLIFQVTPLSG) the chain is Lumenal. A helical membrane pass occupies residues 965-985 (RQWGVVLQMSLPVILLDEALK). The Cytoplasmic portion of the chain corresponds to 986–999 (YLSRNHMDEKKDLK).

It belongs to the cation transport ATPase (P-type) (TC 3.A.3) family. Type IIA subfamily. Interacts with sarcolipin (SLN). Interacts with phospholamban (PLN). Interacts with myoregulin (MRLN). Interacts with DWORF. Interacts with VMP1. Interacts with TUNAR; the interaction occurs at low levels in low glucose conditions and is increased by high glucose levels. Mg(2+) is required as a cofactor.

The protein resides in the endoplasmic reticulum membrane. It localises to the sarcoplasmic reticulum membrane. The enzyme catalyses Ca(2+)(in) + ATP + H2O = Ca(2+)(out) + ADP + phosphate + H(+). Inhibited by sarcolipin (SLN), phospholamban (PLN) and myoregulin (MRLN). Enhanced by DWORF; DWORF increases activity by displacing sarcolipin (SLN), phospholamban (PLN) and myoregulin (MRLN). This magnesium-dependent enzyme catalyzes the hydrolysis of ATP coupled with the transport of calcium. Transports calcium ions from the cytosol into the sarcoplasmic/endoplasmic reticulum lumen. Contributes to calcium sequestration involved in muscular excitation/contraction. In Mus musculus (Mouse), this protein is Sarcoplasmic/endoplasmic reticulum calcium ATPase 3 (Atp2a3).